A 367-amino-acid polypeptide reads, in one-letter code: MNMKGKALLAGCIALSLSNMAFAKDIKVAVVGAMSGPVAQYGDQEFTGAEQAIADINAKGGVKGDKLVMVKYDDACDPKQAVAVANKVVNDGIKYVIGHLCSSSTQPASDIYEDEGILMITPAATAPELTARGYNLVLRTTGLDSDQGPTAAKYIVEKVKPKRIAIVHDKQQYGEGLARSVQDNLKKANADVVFFDGITAGEKDFSTLVARLKKENIDFVYYGGYHPEMGQILRQARAAGLKTQFMGPEGVANVSLSNIAGESAEGLLVTKPKNYDQVPANKPIVDAIKAKKQDPSGAFVWTTYAALQSLQAGLNQSDDPAEIAKYLKANSVETVMGPLSWDAKGDLKGFEFGVFDWHANGTATDAK.

An N-terminal signal peptide occupies residues 1–23 (MNMKGKALLAGCIALSLSNMAFA). A disulfide bridge links C76 with C101.

It belongs to the leucine-binding protein family.

The protein resides in the periplasm. Its function is as follows. This protein is a component of the leucine, isoleucine, valine, (threonine) transport system, which is one of the two periplasmic binding protein-dependent transport systems of the high-affinity transport of the branched-chain amino acids. The polypeptide is Leu/Ile/Val-binding protein (livJ) (Citrobacter freundii).